An 83-amino-acid polypeptide reads, in one-letter code: Hepcidin (83 aa).

The signal sequence occupies residues 1–23 (MALSTRTQAACLLLLLLASLSST). Residues 24–53 (TYLHQQMRQTTELQPLHGEESRADIAIPMQ) constitute a propeptide that is removed on maturation. Cystine bridges form between Cys-65/Cys-81, Cys-68/Cys-71, Cys-69/Cys-77, and Cys-72/Cys-80.

Belongs to the hepcidin family. In terms of assembly, interacts with SLC40A1; this interaction promotes SLC40A1 rapid ubiquitination. In terms of tissue distribution, highly expressed in the liver and to a much lesser extent in the heart. Secreted in blood.

It is found in the secreted. Functionally, liver-produced hormone that constitutes the main circulating regulator of iron absorption and distribution across tissues. Acts by promoting endocytosis and degradation of SLC40A1, leading to the retention of iron in iron-exporting cells and decreased flow of iron into plasma. Controls the major flows of iron into plasma: absorption of dietary iron in the intestine, recycling of iron by macrophages, which phagocytose old erythrocytes and other cells, and mobilization of stored iron from hepatocytes. The chain is Hepcidin (Hamp) from Mus musculus (Mouse).